A 254-amino-acid polypeptide reads, in one-letter code: tRNA (guanine-N(1)-)-methyltransferase (254 aa).

S-adenosyl-L-methionine is bound by residues Gly113 and Ile133–Leu138.

Belongs to the RNA methyltransferase TrmD family. Homodimer.

The protein localises to the cytoplasm. The catalysed reaction is guanosine(37) in tRNA + S-adenosyl-L-methionine = N(1)-methylguanosine(37) in tRNA + S-adenosyl-L-homocysteine + H(+). Its function is as follows. Specifically methylates guanosine-37 in various tRNAs. This Edwardsiella ictaluri (strain 93-146) protein is tRNA (guanine-N(1)-)-methyltransferase.